A 284-amino-acid polypeptide reads, in one-letter code: Bifunctional protein FolD (284 aa).

NADP(+) contacts are provided by residues 166–168 (GAS) and Ile-232.

Belongs to the tetrahydrofolate dehydrogenase/cyclohydrolase family. In terms of assembly, homodimer.

It catalyses the reaction (6R)-5,10-methylene-5,6,7,8-tetrahydrofolate + NADP(+) = (6R)-5,10-methenyltetrahydrofolate + NADPH. The enzyme catalyses (6R)-5,10-methenyltetrahydrofolate + H2O = (6R)-10-formyltetrahydrofolate + H(+). Its pathway is one-carbon metabolism; tetrahydrofolate interconversion. In terms of biological role, catalyzes the oxidation of 5,10-methylenetetrahydrofolate to 5,10-methenyltetrahydrofolate and then the hydrolysis of 5,10-methenyltetrahydrofolate to 10-formyltetrahydrofolate. In Shewanella sp. (strain ANA-3), this protein is Bifunctional protein FolD.